The primary structure comprises 534 residues: Zinc finger protein 397 (534 aa).

Serine 31 carries the phosphoserine modification. Positions arginine 50 to phenylalanine 132 constitute an SCAN box domain. Residues lysine 55, lysine 171, lysine 202, and lysine 252 each participate in a glycyl lysine isopeptide (Lys-Gly) (interchain with G-Cter in SUMO2) cross-link. The tract at residues aspartate 197–alanine 242 is disordered. 9 consecutive C2H2-type zinc fingers follow at residues tyrosine 285–histidine 307, tyrosine 313–histidine 335, tyrosine 341–histidine 363, cysteine 369–histidine 391, tyrosine 397–histidine 419, tyrosine 425–histidine 447, tyrosine 453–histidine 475, tyrosine 481–histidine 503, and tyrosine 509–histidine 531.

It belongs to the krueppel C2H2-type zinc-finger protein family.

The protein localises to the nucleus. DNA-dependent transcriptional repressor. The protein is Zinc finger protein 397 (ZNF397) of Bos taurus (Bovine).